Here is a 421-residue protein sequence, read N- to C-terminus: Functional amyloid transporter FapF (421 aa).

Positions 1–24 are cleaved as a signal peptide; it reads MTQTLSLRAVLCATTLVSPFLAQA. Positions 23–64 form a coiled coil; it reads QAATESEVEALKKELLELRQRYEAQQNALMVLEQRVRQVEAQ.

The protein belongs to the amyloid transporter (TC 9.B.153) family.

It localises to the secreted. The protein localises to the cell surface. The protein resides in the cell outer membrane. In terms of biological role, transports fibril components across the outer membrane. Upon overexpression of the endogenous six-gene locus (fapA-fapF), cells form large clumps during liquid growth, make large amounts of biofilm and produce amyloid fibrils. The polypeptide is Functional amyloid transporter FapF (Pseudomonas aeruginosa (strain ATCC 15692 / DSM 22644 / CIP 104116 / JCM 14847 / LMG 12228 / 1C / PRS 101 / PAO1)).